Consider the following 755-residue polypeptide: 1,4-alpha-glucan branching enzyme GlgB (755 aa).

Asp431 acts as the Nucleophile in catalysis. Glu484 serves as the catalytic Proton donor.

Belongs to the glycosyl hydrolase 13 family. GlgB subfamily. Monomer.

The enzyme catalyses Transfers a segment of a (1-&gt;4)-alpha-D-glucan chain to a primary hydroxy group in a similar glucan chain.. The protein operates within glycan biosynthesis; glycogen biosynthesis. In terms of biological role, catalyzes the formation of the alpha-1,6-glucosidic linkages in glycogen by scission of a 1,4-alpha-linked oligosaccharide from growing alpha-1,4-glucan chains and the subsequent attachment of the oligosaccharide to the alpha-1,6 position. This chain is 1,4-alpha-glucan branching enzyme GlgB, found in Prochlorococcus marinus (strain NATL1A).